A 326-amino-acid chain; its full sequence is Iron-sulfur cluster assembly SufBD family protein PH0883 (326 aa).

It belongs to the iron-sulfur cluster assembly SufBD family.

This is Iron-sulfur cluster assembly SufBD family protein PH0883 from Pyrococcus horikoshii (strain ATCC 700860 / DSM 12428 / JCM 9974 / NBRC 100139 / OT-3).